The following is a 187-amino-acid chain: EP300-interacting inhibitor of differentiation 1 (187 aa).

Residues 1–118 (MSEMAELSEL…YDYPEEEQLS (118 aa)) form a disordered region. Composition is skewed to acidic residues over residues 52–63 (LEEEGPMEEEEA) and 93–116 (FESEDEGEEFDDWEDDYDYPEEEQ). The segment at 54-120 (EEGPMEEEEA…YPEEEQLSGA (67 aa)) is interaction with NR0B2. The short motif at 178–182 (LGCDE) is the LXCXE motif element.

Interacts via its LXCXE motif with the entire pocket region of RB1. Interacts with EP300, NR0B2 and TRIM27. Post-translationally, ubiquitinated in U2OS osteosarcoma cells and is rapidly degraded by proteasome as cells exit the cell cycle exit. Widely expressed. Most abundantly expressed in heart, skeletal muscle, pancreas, brain and testis. Expressed at much lower levels in placenta and peripheral blood leukocyte. Barely detectable in lung. Also weakly expressed in lung carcinoma A-549 and various leukemia cell lines.

The protein resides in the nucleus. It localises to the cytoplasm. Functionally, interacts with RB1 and EP300 and acts as a repressor of MYOD1 transactivation. Inhibits EP300 and CBP histone acetyltransferase activity. May be involved in coupling cell cycle exit to the transcriptional activation of genes required for cellular differentiation. May act as a candidate coinhibitory factor for NR0B2 that can be directly linked to transcription inhibitory mechanisms. The polypeptide is EP300-interacting inhibitor of differentiation 1 (Homo sapiens (Human)).